Reading from the N-terminus, the 680-residue chain is MVKVEDDVEGSGINASVGDLRDAAVNPQPALLRATVKEEEGQPSSSSSHVRSQFIGMGFSPMLVDRVLQKHGDRDSDTILEALLSQSALQKSGSESGSLGDLFDSDNEENSSHFAPRKEVIQDIKVEADSSSEKRSYLLSTMNFSQREVDLALNQLGEEASLEQLVDFIVTGQVSGCSGGNENGDASNEVKDESLFGVMDKTLHLLQMGFTEEEVSSVIDKAGPEATVLELADTIFARRIASSIEQKEVKVEPDFLDETETSYSAYHPSNSGLRYYDDDHDNIRIKRAKHMFIDDSAGSSSRAGNQPNLDPWLKDHRATTSDGSVKEEFDAMTPGIRRNVRSDVANPPYFLYGNVVEIPKATWRQLSEFLYNVEPEFVNSQFFSALSRKEGYIHNLPTEGRRNLVPRSPMTIEEAFPFTRQCWPSWDTRKQLNSVATEVAGIEQLCERLGKMVRDSGGYLSQEKKTHIMHQCKLANLIWVGPDRLSPLDPQQVERILGYPRKHTNLFGLNPQDRIEAMRYSFQTDTLGYLLSVLKDLYPDGLRVLSIYSGIGGAAIALHRLGIPLQCVVSVDQSDTNRKILRRWWSNTEQKGQLRQINTIWKLKINVLEDLVKEFGGFDIIIGGNFSSCKGGTTVNSSMGMDSNQFFEYVRVVQRVKHIMGRLQVRAHESARHRHRSPSN.

Positions methionine 1–alanine 24 are disordered. Positions serine 45–glutamine 86 constitute a UBA 1 domain. A disordered region spans residues lysine 91 to histidine 113. The region spanning serine 194–isoleucine 235 is the UBA 2 domain. One can recognise an SAM-dependent MTase DRM-type domain in the interval isoleucine 336–leucine 663.

This sequence belongs to the class I-like SAM-binding methyltransferase superfamily. DRM-methyltransferase family.

It localises to the nucleus. Involved in de novo DNA methylation. Involved in RNA-directed DNA methylation (RdDM). The protein is Probable inactive DNA (cytosine-5)-methyltransferase DRM3 of Oryza sativa subsp. japonica (Rice).